We begin with the raw amino-acid sequence, 241 residues long: 3-dehydroquinate dehydratase (241 aa).

Residues 35–37 (ELR) and Arg70 each bind 3-dehydroquinate. His132 (proton donor/acceptor) is an active-site residue. Lys159 (schiff-base intermediate with substrate) is an active-site residue. 3-dehydroquinate-binding residues include Arg201 and Gln224.

This sequence belongs to the type-I 3-dehydroquinase family. As to quaternary structure, homodimer.

It catalyses the reaction 3-dehydroquinate = 3-dehydroshikimate + H2O. The protein operates within metabolic intermediate biosynthesis; chorismate biosynthesis; chorismate from D-erythrose 4-phosphate and phosphoenolpyruvate: step 3/7. Involved in the third step of the chorismate pathway, which leads to the biosynthesis of aromatic amino acids. Catalyzes the cis-dehydration of 3-dehydroquinate (DHQ) and introduces the first double bond of the aromatic ring to yield 3-dehydroshikimate. The sequence is that of 3-dehydroquinate dehydratase from Staphylococcus carnosus (strain TM300).